A 313-amino-acid chain; its full sequence is Porphobilinogen deaminase (313 aa).

Cysteine 242 carries the S-(dipyrrolylmethanemethyl)cysteine modification.

It belongs to the HMBS family. In terms of assembly, monomer. It depends on dipyrromethane as a cofactor.

The enzyme catalyses 4 porphobilinogen + H2O = hydroxymethylbilane + 4 NH4(+). It functions in the pathway porphyrin-containing compound metabolism; protoporphyrin-IX biosynthesis; coproporphyrinogen-III from 5-aminolevulinate: step 2/4. Functionally, tetrapolymerization of the monopyrrole PBG into the hydroxymethylbilane pre-uroporphyrinogen in several discrete steps. This chain is Porphobilinogen deaminase, found in Yersinia pestis bv. Antiqua (strain Angola).